A 207-amino-acid chain; its full sequence is Peptidyl-tRNA hydrolase (207 aa).

Tyrosine 17 contacts tRNA. Histidine 22 functions as the Proton acceptor in the catalytic mechanism. TRNA is bound by residues phenylalanine 68, asparagine 70, and asparagine 116.

Belongs to the PTH family. As to quaternary structure, monomer.

It is found in the cytoplasm. It carries out the reaction an N-acyl-L-alpha-aminoacyl-tRNA + H2O = an N-acyl-L-amino acid + a tRNA + H(+). Functionally, hydrolyzes ribosome-free peptidyl-tRNAs (with 1 or more amino acids incorporated), which drop off the ribosome during protein synthesis, or as a result of ribosome stalling. Its function is as follows. Catalyzes the release of premature peptidyl moieties from peptidyl-tRNA molecules trapped in stalled 50S ribosomal subunits, and thus maintains levels of free tRNAs and 50S ribosomes. This Buchnera aphidicola subsp. Baizongia pistaciae (strain Bp) protein is Peptidyl-tRNA hydrolase.